Reading from the N-terminus, the 285-residue chain is MSRNFSMQAKVFIKPLVLFQIIDAYERRPKGDNQVMGTLLGRNKEGHFEITNCFPVPHKEHPEINRIDLDISYASEFLELNMLTYSNERVLGWFSTGKSVSRSASLLHDYYARECGEIQPVHLVMDATLKSQRLSTRLYCAVEIGVPGGTKGLMFSLVPLEISNGNSDLVALRSLEKQSLQQGTKQMERFLPELVQVVDATRDIQQRLDLVLRYINDVLARKRKPDNVIGRALYAALTAVPLLDSEKFRLMFNTNLRDMLMAITLSTMIKTQLEISEKLSCMQDQ.

The region spanning 11–145 (VFIKPLVLFQ…TRLYCAVEIG (135 aa)) is the MPN domain.

It belongs to the eIF-3 subunit F family. In terms of assembly, component of the eukaryotic translation initiation factor 3 (eIF-3) complex. The eIF-3 complex interacts with pix.

Its subcellular location is the cytoplasm. Functionally, component of the eukaryotic translation initiation factor 3 (eIF-3) complex, which is involved in protein synthesis of a specialized repertoire of mRNAs and, together with other initiation factors, stimulates binding of mRNA and methionyl-tRNAi to the 40S ribosome. The eIF-3 complex specifically targets and initiates translation of a subset of mRNAs involved in cell proliferation. The sequence is that of Eukaryotic translation initiation factor 3 subunit F-2 from Drosophila yakuba (Fruit fly).